The chain runs to 147 residues: Large ribosomal subunit protein uL13 (147 aa).

Belongs to the universal ribosomal protein uL13 family. In terms of assembly, part of the 50S ribosomal subunit.

In terms of biological role, this protein is one of the early assembly proteins of the 50S ribosomal subunit, although it is not seen to bind rRNA by itself. It is important during the early stages of 50S assembly. In Levilactobacillus brevis (strain ATCC 367 / BCRC 12310 / CIP 105137 / JCM 1170 / LMG 11437 / NCIMB 947 / NCTC 947) (Lactobacillus brevis), this protein is Large ribosomal subunit protein uL13.